The following is a 1362-amino-acid chain: Bromodomain-containing protein 4 (1362 aa).

The segment at 1-58 (MSAESGPGTRLRNLPVMGDGLETSQMSTTQAQAQPQPANAASTNPPPPETSNPNKPKR) is disordered. The span at 23–43 (TSQMSTTQAQAQPQPANAAST) shows a compositional bias: low complexity. The Bromo 1 domain maps to 58 to 164 (RQTNQLQYLL…KLFLQKINEL (107 aa)). Residue Lys-99 forms a Glycyl lysine isopeptide (Lys-Gly) (interchain with G-Cter in SUMO2) linkage. Disordered regions lie at residues 174–229 (VQAK…PAVT), 242–352 (VPPQ…KVSE), and 463–615 (EPVV…YEEK). A compositionally biased stretch (low complexity) spans 197 to 211 (PNTTQASTPPQTQTP). 2 stretches are compositionally biased toward pro residues: residues 212–227 (QPNPPPVQATPHPFPA) and 243–266 (PPQPLQTPPPVPPQPQPPPAPAPQ). The span at 320–336 (QRRESSRPVKPPKKDVP) shows a compositional bias: basic and acidic residues. A Bromo 2 domain is found at 348–457 (SKVSEQLKCC…DVFEMRFAKM (110 aa)). At Ser-470 the chain carries Phosphoserine. The span at 478–497 (KVVAPPSSSDSSSDSSSDSD) shows a compositional bias: low complexity. 7 positions are modified to phosphoserine; by CK2: Ser-484, Ser-488, Ser-492, Ser-494, Ser-498, Ser-499, and Ser-503. The NPS region stretch occupies residues 484–503 (SSSDSSSDSSSDSDSSTDDS). The interval 524–579 (QLAALSQPQQNKPKKKEKDKKEKKKEKHKRKEEVEENKKSKAKEPPPKKTKKNNSS) is BID region. Over residues 535–553 (KPKKKEKDKKEKKKEKHKR) the composition is skewed to basic residues. Basic and acidic residues predominate over residues 554-570 (KEEVEENKKSKAKEPPP). Lys-585 is covalently cross-linked (Glycyl lysine isopeptide (Lys-Gly) (interchain with G-Cter in SUMO2)). In terms of domain architecture, NET spans 600–682 (ESEEEDKCKP…SCLRKKRKPQ (83 aa)). Ser-601 is subject to Phosphoserine. Basic and acidic residues predominate over residues 605-615 (DKCKPMSYEEK). Residues Lys-645 and Lys-694 each participate in a glycyl lysine isopeptide (Lys-Gly) (interchain with G-Cter in SUMO2) cross-link. Positions 674-1100 (CLRKKRKPQA…PKKQELRAAS (427 aa)) are disordered. A compositionally biased stretch (low complexity) spans 699–712 (SSSESESSSESSSS). Residues 724-744 (KSKKKGHPGREQKKHHHHHHQ) are compositionally biased toward basic residues. 3 stretches are compositionally biased toward pro residues: residues 751-785 (APVPQQPPPPPQQPPPPPPPQQQQQPPPPPPPPSM), 833-846 (PELPPHLPQPPEHS), and 881-890 (PPKPARPPAV). A compositionally biased stretch (low complexity) spans 926–936 (MQMQLYLQQLQ). Composition is skewed to pro residues over residues 953-964 (QPPPPLPPPPHP), 973-996 (QPPPPPPPQPQPPPQQQHQPPPRP), and 1010-1034 (QPPPPQGQQPPHPPPGQQPPPPQPA). Basic residues predominate over residues 1041–1050 (QHHHSPRHHK). Residues 1047 to 1362 (RHHKSDPYST…LLSIFEENLF (316 aa)) form a C-terminal (CTD) region region. A Glycyl lysine isopeptide (Lys-Gly) (interchain with G-Cter in SUMO2) cross-link involves residue Lys-1050. The span at 1071–1091 (PQMSQFQSLTHQSPPQQNVQP) shows a compositional bias: polar residues. N6-acetyllysine; alternate is present on Lys-1111. Lys-1111 is covalently cross-linked (Glycyl lysine isopeptide (Lys-Gly) (interchain with G-Cter in SUMO1); alternate). Lys-1111 is covalently cross-linked (Glycyl lysine isopeptide (Lys-Gly) (interchain with G-Cter in SUMO2); alternate). The tract at residues 1116–1339 (HSPIIRSEPF…KREQERRRRE (224 aa)) is disordered. A phosphoserine mark is found at Ser-1117 and Ser-1126. The segment covering 1175-1196 (PDKDKQKQEPKTPVAPKKDLKI) has biased composition (basic and acidic residues). Lys-1197 participates in a covalent cross-link: Glycyl lysine isopeptide (Lys-Gly) (interchain with G-Cter in SUMO2). 2 positions are modified to phosphoserine: Ser-1201 and Ser-1204. The span at 1211 to 1223 (TTPSSTAKSSSDS) shows a compositional bias: low complexity. A compositionally biased stretch (basic and acidic residues) spans 1225–1284 (EQFRRAAREKEEREKALKAQAEHAEKEKERLRQERMRSREDEDALEQARRAHEEARRRQE). The segment covering 1285-1313 (QQQQQRQEQQQQQQQQAAAVAAAATPQAQ) has biased composition (low complexity). Over residues 1323–1339 (QQRELARKREQERRRRE) the composition is skewed to basic and acidic residues.

This sequence belongs to the BET family. As to quaternary structure, interacts with p53/TP53; the interaction is direct. Interacts (via CTD region) with CDK9 and CCNT1, acting as an associated component of P-TEFb complex. Interacts with RELA (when acetylated at 'Lys-310'). Interacts (via NET domain) with NSD3, CHD4, BICRA and ATAD5. The interaction with BICRA bridges BRD4 to the GBAF complex. Interacts (via NET domain) with JMJD6 (via JmjC and N-terminal domains); the interaction is stronger in presence of ssRNA and recruits JMJD6 on distal enhancers. Interacts with NSD3. Interacts with NIPBL. Interacts with SMC2. Interacts with NCAPD3. In terms of assembly, (Microbial infection) Interacts with bovine papillomavirus type 1 regulatory protein E2. This interactions may serve for the tethering of viral genomes to host mitotic chromosomes allowing successful partitioning of the viral genome during cell division. As to quaternary structure, (Microbial infection) Interacts with Epstein-Barr virus (EBV) protein EBNA1; this interaction facilitates transcriptional activation by EBNA1. (Microbial infection) Interacts with human herpes virus-8 (HHV-8) protein LANA. Post-translationally, phosphorylation by CK2 disrupt the intramolecular binding between the bromo domain 2 and the NPS region and promotes binding between the NPS and the BID regions, leading to activate the protein and promote binding to acetylated histones. In absence of phosphorylation, BRD4 does not localize to p53/TP53 target gene promoters, phosphorylation promoting recruitment to p53/TP53 target promoters. Ubiquitously expressed.

It is found in the nucleus. The protein resides in the chromosome. With respect to regulation, inhibited by JQ1, a thieno-triazolo-1,4-diazepine derivative, which specifically inhibits members of the BET family (BRD2, BRD3 and BRD4). The first bromo domain is inhibited by GSK778 (iBET-BD1), which specifically inhibits the first bromo domain of members of the BET family (BRD2, BRD3 and BRD4). The second bromo domain is inhibited by ABBV-744, which specifically inhibits the second bromo domain of members of the BET family (BRD2, BRD3 and BRD4). The second bromo domain is inhibited by GSK046 (iBET-BD2), which specifically inhibits the second bromo domain of members of the BET family (BRD2, BRD3 and BRD4). In terms of biological role, chromatin reader protein that recognizes and binds acetylated histones and plays a key role in transmission of epigenetic memory across cell divisions and transcription regulation. Remains associated with acetylated chromatin throughout the entire cell cycle and provides epigenetic memory for postmitotic G1 gene transcription by preserving acetylated chromatin status and maintaining high-order chromatin structure. During interphase, plays a key role in regulating the transcription of signal-inducible genes by associating with the P-TEFb complex and recruiting it to promoters. Also recruits P-TEFb complex to distal enhancers, so called anti-pause enhancers in collaboration with JMJD6. BRD4 and JMJD6 are required to form the transcriptionally active P-TEFb complex by displacing negative regulators such as HEXIM1 and 7SKsnRNA complex from P-TEFb, thereby transforming it into an active form that can then phosphorylate the C-terminal domain (CTD) of RNA polymerase II. Regulates differentiation of naive CD4(+) T-cells into T-helper Th17 by promoting recruitment of P-TEFb to promoters. Promotes phosphorylation of 'Ser-2' of the C-terminal domain (CTD) of RNA polymerase II. According to a report, directly acts as an atypical protein kinase and mediates phosphorylation of 'Ser-2' of the C-terminal domain (CTD) of RNA polymerase II; these data however need additional evidences in vivo. In addition to acetylated histones, also recognizes and binds acetylated RELA, leading to further recruitment of the P-TEFb complex and subsequent activation of NF-kappa-B. Also acts as a regulator of p53/TP53-mediated transcription: following phosphorylation by CK2, recruited to p53/TP53 specific target promoters. Acts as a chromatin insulator in the DNA damage response pathway. Inhibits DNA damage response signaling by recruiting the condensin-2 complex to acetylated histones, leading to chromatin structure remodeling, insulating the region from DNA damage response by limiting spreading of histone H2AX/H2A.x phosphorylation. The chain is Bromodomain-containing protein 4 (BRD4) from Homo sapiens (Human).